The primary structure comprises 433 residues: Adenylosuccinate synthetase (433 aa).

GTP-binding positions include G13–K19 and G41–T43. D14 (proton acceptor) is an active-site residue. Positions 14 and 41 each coordinate Mg(2+). IMP is bound by residues D14–K17, N39–H42, T130, R144, Q225, T240, and R304. The Proton donor role is filled by H42. S300–R306 lines the substrate pocket. GTP-binding positions include R306, K332–D334, and S414–G416.

It belongs to the adenylosuccinate synthetase family. In terms of assembly, homodimer. Mg(2+) is required as a cofactor.

Its subcellular location is the cytoplasm. The catalysed reaction is IMP + L-aspartate + GTP = N(6)-(1,2-dicarboxyethyl)-AMP + GDP + phosphate + 2 H(+). Its pathway is purine metabolism; AMP biosynthesis via de novo pathway; AMP from IMP: step 1/2. Its function is as follows. Plays an important role in the de novo pathway of purine nucleotide biosynthesis. Catalyzes the first committed step in the biosynthesis of AMP from IMP. The protein is Adenylosuccinate synthetase of Buchnera aphidicola subsp. Acyrthosiphon pisum (strain Tuc7).